Consider the following 149-residue polypeptide: Deoxyuridine 5'-triphosphate nucleotidohydrolase (149 aa).

Substrate-binding positions include 68–70 (RSG), Asn81, and 85–87 (LID).

This sequence belongs to the dUTPase family. Mg(2+) serves as cofactor.

It carries out the reaction dUTP + H2O = dUMP + diphosphate + H(+). It functions in the pathway pyrimidine metabolism; dUMP biosynthesis; dUMP from dCTP (dUTP route): step 2/2. In terms of biological role, this enzyme is involved in nucleotide metabolism: it produces dUMP, the immediate precursor of thymidine nucleotides and it decreases the intracellular concentration of dUTP so that uracil cannot be incorporated into DNA. The protein is Deoxyuridine 5'-triphosphate nucleotidohydrolase of Laribacter hongkongensis (strain HLHK9).